A 748-amino-acid chain; its full sequence is Signal transducer and activator of transcription 4 (748 aa).

The SH2 domain maps to Trp-569–Asp-664. Lys-667 is modified (N6-acetyllysine). Tyr-693 carries the post-translational modification Phosphotyrosine; by JAK. Ser-721 bears the Phosphoserine; by MAP2K6 mark.

It belongs to the transcription factor STAT family. In terms of assembly, forms a homodimer or a heterodimer with a related family member. Interacts with ARL2BP. The SH2 domain interacts, in vitro, with IL12RB2 via a short cytoplasmic domain. Interacts with STAT1. Interacts with JUN; this complex efficiently interacts with the AP-1-related sequence of the IFN-gamma. Post-translationally, acetylation at Lys-667 is required for JAK2-mediated phosphorylation and activation of STAT4. Tyrosine phosphorylated upon IL12 and IFN-alpha activation, but not by IFN-gamma in T-lymphocytes and NK cells. Serine phosphorylation is required for maximal transcriptional activity but not for DNA binding. Phosphorylation by MAP2K6 at Ser-721 is required for full transcriptional activity induced by IL12. However this serine phosphorylation is not required for cell proliferation although critical for IFN-gamma production.

The protein localises to the cytoplasm. Its subcellular location is the nucleus. In terms of biological role, transcriptional regulator mainly expressed in hematopoietic cells that plays a critical role in cellular growth, differentiation and immune response. Plays a key role in the differentiation of T-helper 1 cells and the production of interferon-gamma. Also participates in multiple neutrophil functions including chemotaxis and production of the neutrophil extracellular traps. After IL12 binding to its receptor IL12RB2, STAT4 interacts with the intracellular domain of IL12RB2 and becomes tyrosine phosphorylated. Phosphorylated STAT4 then homodimerizes and migrates to the nucleus where it can recognize STAT target sequences present in IL12 responsive genes. Although IL12 appears to be the predominant activating signal, STAT4 can also be phosphorylated and activated in response to IFN-gamma stimulation via JAK1 and TYK2 and in response to different interleukins including IL23, IL2 and IL35. Transcription activation of IFN-gamma gene is mediated by interaction with JUN that forms a complex that efficiently interacts with the AP-1-related sequence of the IFN-gamma promoter. In response to IFN-alpha/beta signaling, acts as a transcriptional repressor and suppresses IL5 and IL13 mRNA expression during response to T-cell receptor (TCR) activation. In Homo sapiens (Human), this protein is Signal transducer and activator of transcription 4 (STAT4).